The sequence spans 426 residues: Dihydrofolate synthase/folylpolyglutamate synthase (426 aa).

58–61 serves as a coordination point for ATP; the sequence is GKGS. S82 is a binding site for Mg(2+). 121 to 124 is a binding site for 7,8-dihydropteroate; that stretch reads TRFE. E145 provides a ligand contact to Mg(2+). 152–154 is a 7,8-dihydropteroate binding site; it reads LDA. Residue H172 coordinates Mg(2+). Residues R289 and D302 each contribute to the ATP site.

The protein belongs to the folylpolyglutamate synthase family. Monomer. It depends on Mg(2+) as a cofactor.

It carries out the reaction 7,8-dihydropteroate + L-glutamate + ATP = 7,8-dihydrofolate + ADP + phosphate + H(+). It catalyses the reaction (6S)-5,6,7,8-tetrahydrofolyl-(gamma-L-Glu)(n) + L-glutamate + ATP = (6S)-5,6,7,8-tetrahydrofolyl-(gamma-L-Glu)(n+1) + ADP + phosphate + H(+). The enzyme catalyses 10-formyltetrahydrofolyl-(gamma-L-Glu)(n) + L-glutamate + ATP = 10-formyltetrahydrofolyl-(gamma-L-Glu)(n+1) + ADP + phosphate + H(+). The catalysed reaction is (6R)-5,10-methylenetetrahydrofolyl-(gamma-L-Glu)(n) + L-glutamate + ATP = (6R)-5,10-methylenetetrahydrofolyl-(gamma-L-Glu)(n+1) + ADP + phosphate + H(+). The protein operates within cofactor biosynthesis; tetrahydrofolate biosynthesis; 7,8-dihydrofolate from 2-amino-4-hydroxy-6-hydroxymethyl-7,8-dihydropteridine diphosphate and 4-aminobenzoate: step 2/2. Its pathway is cofactor biosynthesis; tetrahydrofolylpolyglutamate biosynthesis. Functions in two distinct reactions of the de novo folate biosynthetic pathway. Catalyzes the addition of a glutamate residue to dihydropteroate (7,8-dihydropteroate or H2Pte) to form dihydrofolate (7,8-dihydrofolate monoglutamate or H2Pte-Glu). Also catalyzes successive additions of L-glutamate to tetrahydrofolate or 10-formyltetrahydrofolate or 5,10-methylenetetrahydrofolate, leading to folylpolyglutamate derivatives. The chain is Dihydrofolate synthase/folylpolyglutamate synthase (folC) from Buchnera aphidicola subsp. Baizongia pistaciae (strain Bp).